Here is a 446-residue protein sequence, read N- to C-terminus: Histidine--tRNA ligase (446 aa).

The interval 403–422 (TASVKPLRGTGDDGEKSVQQ) is disordered.

Belongs to the class-II aminoacyl-tRNA synthetase family. As to quaternary structure, homodimer.

The protein localises to the cytoplasm. The enzyme catalyses tRNA(His) + L-histidine + ATP = L-histidyl-tRNA(His) + AMP + diphosphate + H(+). The chain is Histidine--tRNA ligase from Burkholderia thailandensis (strain ATCC 700388 / DSM 13276 / CCUG 48851 / CIP 106301 / E264).